Reading from the N-terminus, the 125-residue chain is Small ribosomal subunit protein bS6m (125 aa).

This sequence belongs to the bacterial ribosomal protein bS6 family. As to quaternary structure, component of the mitochondrial small ribosomal subunit (mt-SSU). Mature mammalian 55S mitochondrial ribosomes consist of a small (28S) and a large (39S) subunit. The 28S small subunit contains a 12S ribosomal RNA (12S mt-rRNA) and 30 different proteins. The 39S large subunit contains a 16S rRNA (16S mt-rRNA), a copy of mitochondrial valine transfer RNA (mt-tRNA(Val)), which plays an integral structural role, and 52 different proteins.

The protein resides in the mitochondrion. This Homo sapiens (Human) protein is Small ribosomal subunit protein bS6m (MRPS6).